A 434-amino-acid polypeptide reads, in one-letter code: Probable phosphoglucosamine mutase (434 aa).

Serine 91 functions as the Phosphoserine intermediate in the catalytic mechanism. Residues serine 91, aspartate 229, aspartate 231, and aspartate 233 each coordinate Mg(2+). Position 91 is a phosphoserine (serine 91).

Belongs to the phosphohexose mutase family. Requires Mg(2+) as cofactor. Post-translationally, activated by phosphorylation.

The enzyme catalyses alpha-D-glucosamine 1-phosphate = D-glucosamine 6-phosphate. Functionally, catalyzes the conversion of glucosamine-6-phosphate to glucosamine-1-phosphate. The polypeptide is Probable phosphoglucosamine mutase (Methanosarcina acetivorans (strain ATCC 35395 / DSM 2834 / JCM 12185 / C2A)).